Reading from the N-terminus, the 80-residue chain is MPHRYPAAKINKMPKGSVPALQQEMLRRVSKRYDDVEVIIKSTSNDGLSVTRTADKDSAKTFVQETLKDTWESADEWFVR.

This Escherichia coli O157:H7 protein is DinI-like protein Z2083/ECs2153.